Here is a 192-residue protein sequence, read N- to C-terminus: Interleukin-18 (192 aa).

The propeptide occupies 1-35 (MAAMSEDSCVNFKEMMFIDNTLYFIPEENGDLESD).

This sequence belongs to the IL-1 family. Forms a ternary complex with ligand-binding receptor subunit IL18R1 and signaling receptor subunit IL18RAP at the plasma membrane. Mature IL18 first binds to IL18R1 forming a low affinity binary complex, which then interacts with IL18RAP to form a high affinity ternary complex that signals inside the cell. Interacts with cargo receptor TMED10; the interaction mediates the translocation from the cytoplasm into the ERGIC (endoplasmic reticulum-Golgi intermediate compartment) and thereby secretion. Post-translationally, the pro-IL-18 precursor is processed by CASP1 to yield its mature, active form. The pro-IL-18 precursor is however not processed by Casp4/Casp11 in rodents. The pro-IL-18 precursor features autoinhibitory interactions between the propeptide and the post-cleavage-site region, preventing recognition by the IL18R1 receptor. Processing by CASP1 induces conformational changes to generate critical receptor-binding sites. The mature form is then secreted and released in the extracellular milieu by passing through the gasdermin-D (GSDMD) pore. In contrast, cleavage by CASP3 inactivates IL18.

It localises to the cytoplasm. Its subcellular location is the secreted. Its function is as follows. Pro-inflammatory cytokine primarily involved in epithelial barrier repair, polarized T-helper 1 (Th1) cell and natural killer (NK) cell immune responses. Upon binding to IL18R1 and IL18RAP, forms a signaling ternary complex which activates NF-kappa-B, triggering synthesis of inflammatory mediators. Synergizes with IL12/interleukin-12 to induce IFNG synthesis from T-helper 1 (Th1) cells and natural killer (NK) cells. Involved in transduction of inflammation downstream of pyroptosis: its mature form is specifically released in the extracellular milieu by passing through the gasdermin-D (GSDMD) pore. This chain is Interleukin-18, found in Mus musculus (Mouse).